The sequence spans 20 residues: Thylakoid lumenal 18.4 kDa protein (20 aa).

The protein resides in the plastid. Its subcellular location is the chloroplast thylakoid lumen. The sequence is that of Thylakoid lumenal 18.4 kDa protein from Spinacia oleracea (Spinach).